A 1154-amino-acid chain; its full sequence is FERM domain-containing protein A (1154 aa).

5 disordered regions span residues 122 to 149 (NNNS…SSSS), 432 to 468 (NLSS…NHHN), 715 to 734 (NKNN…SSSS), 771 to 794 (SNSN…TSSS), and 961 to 980 (TNGS…NNGI). FERM domains lie at 218–547 (PLHQ…PSIQ) and 666–1103 (REIV…QTKL). Gly residues predominate over residues 437-447 (GGSGNGSGSGN). Residues 448–463 (GSSSSSSNSSSGNNNN) show a composition bias toward low complexity.

Its function is as follows. Key regulator of adhesion dynamics, it acts as an anti-adhesive. Plays a critical role in the regulation of cell-cell adhesion, multi-cellular development and, in particular, the formation of the organising center known as the tip. Required for turnover of paxillin-adhesion sites during cell migration. Plays a major role in normal cell shape, cell-substrate adhesion and actin cytoskeleton organization. This Dictyostelium discoideum (Social amoeba) protein is FERM domain-containing protein A (frmA).